The sequence spans 341 residues: Transcription factor ETV7 (341 aa).

In terms of domain architecture, PNT spans 33-117 (NLLGEGGICK…ELLQYIKTQR (85 aa)). The ETS DNA-binding region spans 224-305 (RLLWDYVYQL…PGQKLLFRFL (82 aa)). The tract at residues 315-341 (KHSHLEPLESQEQDRIEFKDKRPEISP) is disordered.

Belongs to the ETS family. Expressed in hematopoietic tissues.

It is found in the nucleus. Functionally, transcriptional repressor; binds to the DNA sequence 5'-CCGGAAGT-3'. Isoform A does not seem to have a repressor activity. Isoform C does not seem to have a repressor activity. The sequence is that of Transcription factor ETV7 (ETV7) from Homo sapiens (Human).